Here is a 1402-residue protein sequence, read N- to C-terminus: Defective in tip formation protein A (1402 aa).

Disordered stretches follow at residues 1–20, 37–94, 109–133, and 210–292; these read MKDIEASKKPHTTTVAPPQI, NVTT…PQIV, NTPSLSSTPSPLPNNNNSNENDNDI, and KQSS…RRLK. Repeat copies occupy residues 12-18 and 40-46. The 4 X 7 AA repeat of T-T-T-[IV]-[AQ]-P-P stretch occupies residues 12-92; sequence TTTVAPPQIN…TTTTTVQPPQ (81 aa). The segment covering 38–47 has biased composition (low complexity); sequence VTTTTVQPPQ. The span at 48-58 shows a compositional bias: pro residues; it reads IVSPPSPPSPP. The span at 59 to 94 shows a compositional bias: low complexity; sequence QTTTIAPPTILPTTKTTTTTTTTTTTTTTVQPPQIV. 2 repeat units span residues 60–66 and 86–92. The span at 210–234 shows a compositional bias: low complexity; it reads KQSSQSQLQQQLSSQSLQQIQQKSK. Pro residues predominate over residues 235-253; that stretch reads QPPPQQQQQQQPPPPPIPL. The segment covering 254 to 279 has biased composition (low complexity); the sequence is LPQIHQQLKPKQQQEQQQQQEQQQQQ. Positions 350-383 form a coiled coil; the sequence is QRIKSFIENHKKKKQKYREYQSEKNQQQKSNSKK. Disordered regions lie at residues 429 to 453 and 712 to 745; these read DQQQQQQQQQQSTMTTTSSSSSPMT and NNNNNNINNNNNNNNNNNNNNNNNNNNNNSNLSN. A compositionally biased stretch (low complexity) spans 430–453; sequence QQQQQQQQQQSTMTTTSSSSSPMT.

It is found in the cell surface. Its function is as follows. Required for correct organization of the actin cytoskeleton and cytokinesis. Also required for apical sorting of prestalk cells, a prerequisite for formation of the tip at the mound stage and subsequent formation of the fruiting body. May be required for cell adhesion. In Dictyostelium discoideum (Social amoeba), this protein is Defective in tip formation protein A (dtfA).